Here is a 431-residue protein sequence, read N- to C-terminus: Adenylosuccinate synthetase (431 aa).

Residues glycine 12–lysine 18 and glycine 40–serine 42 contribute to the GTP site. Aspartate 13 acts as the Proton acceptor in catalysis. Residues aspartate 13 and glycine 40 each contribute to the Mg(2+) site. IMP-binding positions include aspartate 13–lysine 16 and asparagine 38–histidine 41. Catalysis depends on histidine 41, which acts as the Proton donor. The segment at glutamine 114 to glycine 133 is disordered. Over residues glutamine 115–glutamate 125 the composition is skewed to basic and acidic residues. 5 residues coordinate IMP: threonine 130, arginine 144, glutamine 225, threonine 240, and arginine 304. Threonine 300–arginine 306 contributes to the substrate binding site. GTP is bound by residues arginine 306, cysteine 332–aspartate 334, and serine 414–glycine 416.

Belongs to the adenylosuccinate synthetase family. In terms of assembly, homodimer. It depends on Mg(2+) as a cofactor.

It is found in the cytoplasm. The catalysed reaction is IMP + L-aspartate + GTP = N(6)-(1,2-dicarboxyethyl)-AMP + GDP + phosphate + 2 H(+). The protein operates within purine metabolism; AMP biosynthesis via de novo pathway; AMP from IMP: step 1/2. In terms of biological role, plays an important role in the de novo pathway of purine nucleotide biosynthesis. Catalyzes the first committed step in the biosynthesis of AMP from IMP. The polypeptide is Adenylosuccinate synthetase (Pediococcus pentosaceus (strain ATCC 25745 / CCUG 21536 / LMG 10740 / 183-1w)).